The primary structure comprises 80 residues: RNA-binding protein KhpA (80 aa).

One can recognise a KH domain in the interval 33 to 80 (GRTVEVHVHPDDLGKVIGRGGRTATALRKLVAGIGGRGIRVDVVDTDQ).

This sequence belongs to the KhpA RNA-binding protein family.

It is found in the cytoplasm. In terms of biological role, a probable RNA-binding protein. This Mycobacterium leprae (strain TN) protein is RNA-binding protein KhpA.